The primary structure comprises 144 residues: Bacilliredoxin BCE33L1972 (144 aa).

It belongs to the bacilliredoxin family.

In Bacillus cereus (strain ZK / E33L), this protein is Bacilliredoxin BCE33L1972.